The following is a 183-amino-acid chain: MELAQIVERLKKNEVVAYPTEAVFGLGCNPNSKSAVEKLLILKQRPVEKGLILVAHKLDLLLPFIDESRLKQSHWQLLTQQYDCPTTWVVPAKLSVPKFITGQFDSVAVRLCTHPAVAQLCEQTGFALTSTSANLSGLPPCKTAQQVRSQFGEFFPVLDMAVGNAVNPSEIRDIFSRQIFRRG.

The YrdC-like domain maps to 1–183 (MELAQIVERL…IFSRQIFRRG (183 aa)).

This sequence belongs to the SUA5 family. TsaC subfamily.

It localises to the cytoplasm. It catalyses the reaction L-threonine + hydrogencarbonate + ATP = L-threonylcarbamoyladenylate + diphosphate + H2O. Its function is as follows. Required for the formation of a threonylcarbamoyl group on adenosine at position 37 (t(6)A37) in tRNAs that read codons beginning with adenine. Catalyzes the conversion of L-threonine, HCO(3)(-)/CO(2) and ATP to give threonylcarbamoyl-AMP (TC-AMP) as the acyladenylate intermediate, with the release of diphosphate. In Mannheimia succiniciproducens (strain KCTC 0769BP / MBEL55E), this protein is Threonylcarbamoyl-AMP synthase.